Reading from the N-terminus, the 228-residue chain is 7-cyano-7-deazaguanine synthase (228 aa).

9–19 contacts ATP; the sequence is LSGGPDSTTVL. Residues cysteine 193, cysteine 203, cysteine 206, and cysteine 209 each contribute to the Zn(2+) site.

Belongs to the QueC family. Requires Zn(2+) as cofactor.

It catalyses the reaction 7-carboxy-7-deazaguanine + NH4(+) + ATP = 7-cyano-7-deazaguanine + ADP + phosphate + H2O + H(+). It functions in the pathway purine metabolism; 7-cyano-7-deazaguanine biosynthesis. In terms of biological role, catalyzes the ATP-dependent conversion of 7-carboxy-7-deazaguanine (CDG) to 7-cyano-7-deazaguanine (preQ(0)). The sequence is that of 7-cyano-7-deazaguanine synthase from Rickettsia rickettsii (strain Iowa).